The sequence spans 155 residues: UPF0178 protein ACIAD2644 (155 aa).

The segment at 120 to 155 (GAGVQTGGPPPISERDKREFSSALDQTILKQKRKTA) is disordered.

This sequence belongs to the UPF0178 family.

The chain is UPF0178 protein ACIAD2644 from Acinetobacter baylyi (strain ATCC 33305 / BD413 / ADP1).